The following is a 398-amino-acid chain: LIM domain-binding protein 2 (398 aa).

2 disordered regions span residues 245-280 (PPAE…TSAY) and 354-398 (DAAN…QASQ). Low complexity predominate over residues 263–279 (STNNASNSNAGNNATSA). One can recognise an LIM interaction domain (LID) domain in the interval 323 to 362 (DVMVVGEPTLMGGEFGDEDERLITRLENTQYDAANGMDDE).

It belongs to the LDB family. Expressed in adult brain, lung, spleen and kidney. Isoform b is generally expressed at a higher level than isoform a.

Its subcellular location is the nucleus. Functionally, binds to the LIM domain of a wide variety of LIM domain-containing transcription factors. This is LIM domain-binding protein 2 from Xenopus laevis (African clawed frog).